The sequence spans 1204 residues: Exportin-5 (1204 aa).

The segment at 1–108 is necessary for interaction with Ran; the sequence is MEMEQVNALC…ANGTLRILEE (108 aa). Position 396 is an N6-acetyllysine (Lys396). Residues 533–640 form a necessary for interaction with ILF3 region; the sequence is ELLQLVLNFE…KQLLSNELLL (108 aa). Positions 641–642 are pre-siRNA binding; the sequence is TQ.

This sequence belongs to the exportin family. In terms of assembly, component of a nuclear export receptor complex composed of XPO5, RAN, dsRNA-binding proteins and dsRNA. Found in a nuclear export complex with XPO5, RAN, EEF1A1, and aminoacylated tRNA. Found in a nuclear export complex with XPO5, RAN, ILF3 and dsRNA. Found in a nuclear export complex with XPO5, RAN and pre-miRNA. Found in a nuclear export complex with XPO5, RAN, ILF3 and minihelix VA1 dsRNA. Found in a nuclear export complex with XPO5, RAN, ILF3, ZNF346 and dsRNA. Interacts with EEF1A1, ILF3, NUP153, NUP214 and ZNF346. Interacts with RAN and cargo proteins in a GTP-dependent manner. Interacts with ADAR/ADAR1 (via DRBM domains). Interacts with SMAD4; mediates nuclear export of SMAD4. Interacts with RAN (GTP-bound form).

Its subcellular location is the nucleus. The protein localises to the cytoplasm. Mediates the nuclear export of proteins bearing a double-stranded RNA binding domain (dsRBD) and double-stranded RNAs (cargos). XPO5 in the nucleus binds cooperatively to the RNA and to the GTPase Ran in its active GTP-bound form. Proteins containing dsRBDs can associate with this trimeric complex through the RNA. Docking of this complex to the nuclear pore complex (NPC) is mediated through binding to nucleoporins. Upon transit of a nuclear export complex into the cytoplasm, hydrolysis of Ran-GTP to Ran-GDP (induced by RANBP1 and RANGAP1, respectively) cause disassembly of the complex and release of the cargo from the export receptor. XPO5 then returns to the nuclear compartment by diffusion through the nuclear pore complex, to mediate another round of transport. The directionality of nuclear export is thought to be conferred by an asymmetric distribution of the GTP- and GDP-bound forms of Ran between the cytoplasm and nucleus. Overexpression may in some circumstances enhance RNA-mediated gene silencing (RNAi). Mediates nuclear export of ADAR/ADAR1 in a RanGTP-dependent manner. Its function is as follows. Mediates the nuclear export of micro-RNA precursors, which form short hairpins. Also mediates the nuclear export of synthetic short hairpin RNAs used for RNA interference. In some circumstances can also mediate the nuclear export of deacylated and aminoacylated tRNAs. Specifically recognizes dsRNAs that lack a 5'-overhang in a sequence-independent manner, have only a short 3'-overhang, and that have a double-stranded length of at least 15 base-pairs. Binding is dependent on Ran-GTP. The chain is Exportin-5 (Xpo5) from Mus musculus (Mouse).